A 162-amino-acid polypeptide reads, in one-letter code: Crossover junction endodeoxyribonuclease RuvC (162 aa).

Active-site residues include Asp8, Glu69, and His141. 3 residues coordinate Mg(2+): Asp8, Glu69, and His141.

This sequence belongs to the RuvC family. As to quaternary structure, homodimer which binds Holliday junction (HJ) DNA. The HJ becomes 2-fold symmetrical on binding to RuvC with unstacked arms; it has a different conformation from HJ DNA in complex with RuvA. In the full resolvosome a probable DNA-RuvA(4)-RuvB(12)-RuvC(2) complex forms which resolves the HJ. It depends on Mg(2+) as a cofactor.

It localises to the cytoplasm. It carries out the reaction Endonucleolytic cleavage at a junction such as a reciprocal single-stranded crossover between two homologous DNA duplexes (Holliday junction).. Functionally, the RuvA-RuvB-RuvC complex processes Holliday junction (HJ) DNA during genetic recombination and DNA repair. Endonuclease that resolves HJ intermediates. Cleaves cruciform DNA by making single-stranded nicks across the HJ at symmetrical positions within the homologous arms, yielding a 5'-phosphate and a 3'-hydroxyl group; requires a central core of homology in the junction. The consensus cleavage sequence is 5'-(A/T)TT(C/G)-3'. Cleavage occurs on the 3'-side of the TT dinucleotide at the point of strand exchange. HJ branch migration catalyzed by RuvA-RuvB allows RuvC to scan DNA until it finds its consensus sequence, where it cleaves and resolves the cruciform DNA. This is Crossover junction endodeoxyribonuclease RuvC from Wolbachia sp. subsp. Drosophila simulans (strain wRi).